The sequence spans 254 residues: Phosphoribosylaminoimidazole-succinocarboxamide synthase (254 aa).

This sequence belongs to the SAICAR synthetase family.

It carries out the reaction 5-amino-1-(5-phospho-D-ribosyl)imidazole-4-carboxylate + L-aspartate + ATP = (2S)-2-[5-amino-1-(5-phospho-beta-D-ribosyl)imidazole-4-carboxamido]succinate + ADP + phosphate + 2 H(+). It functions in the pathway purine metabolism; IMP biosynthesis via de novo pathway; 5-amino-1-(5-phospho-D-ribosyl)imidazole-4-carboxamide from 5-amino-1-(5-phospho-D-ribosyl)imidazole-4-carboxylate: step 1/2. This is Phosphoribosylaminoimidazole-succinocarboxamide synthase from Brucella anthropi (strain ATCC 49188 / DSM 6882 / CCUG 24695 / JCM 21032 / LMG 3331 / NBRC 15819 / NCTC 12168 / Alc 37) (Ochrobactrum anthropi).